A 102-amino-acid chain; its full sequence is Thioredoxin (102 aa).

The Thioredoxin domain maps to 1–102 (MVKIISSENF…FLTNLINKHA (102 aa)). C28 and C31 are oxidised to a cystine.

It belongs to the thioredoxin family.

In terms of biological role, participates in various redox reactions through the reversible oxidation of its active center dithiol to a disulfide and catalyzes dithiol-disulfide exchange reactions. This chain is Thioredoxin (trxA), found in Chlamydia pneumoniae (Chlamydophila pneumoniae).